The primary structure comprises 168 residues: HTH-type transcriptional regulator IscR (168 aa).

The region spanning 2–131 is the HTH rrf2-type domain; it reads KLTSKGRYAV…NNITLGELMS (130 aa). The segment at residues 28 to 51 is a DNA-binding region (H-T-H motif); sequence LADISERQGISLSYLEQLFSKLRK. Residues cysteine 92, cysteine 98, and cysteine 104 each contribute to the [2Fe-2S] cluster site.

[2Fe-2S] cluster is required as a cofactor.

Regulates the transcription of several operons and genes involved in the biogenesis of Fe-S clusters and Fe-S-containing proteins. This Vibrio vulnificus (strain CMCP6) protein is HTH-type transcriptional regulator IscR.